The following is a 763-amino-acid chain: Phosphoglycerol transferase I (763 aa).

The next 4 helical transmembrane spans lie at 1 to 21 (MSELLSFALFLASVLIYAWKA), 26 to 46 (WWFAATLTVLGLFVVLNITLF), 77 to 97 (ILPGIGIVLGLTAVFGALGWI), and 108 to 128 (FGYSLLALLLALGSVDASPAF).

Belongs to the OpgB family.

It is found in the cell inner membrane. It carries out the reaction a phosphatidylglycerol + a membrane-derived-oligosaccharide D-glucose = a 1,2-diacyl-sn-glycerol + a membrane-derived-oligosaccharide 6-(glycerophospho)-D-glucose.. It functions in the pathway glycan metabolism; osmoregulated periplasmic glucan (OPG) biosynthesis. In terms of biological role, transfers a phosphoglycerol residue from phosphatidylglycerol to the membrane-bound nascent glucan backbones. This Escherichia coli (strain 55989 / EAEC) protein is Phosphoglycerol transferase I.